Reading from the N-terminus, the 365-residue chain is DNA replication and repair protein RecF (365 aa).

Glycine 30–threonine 37 provides a ligand contact to ATP.

It belongs to the RecF family.

The protein resides in the cytoplasm. The RecF protein is involved in DNA metabolism; it is required for DNA replication and normal SOS inducibility. RecF binds preferentially to single-stranded, linear DNA. It also seems to bind ATP. The polypeptide is DNA replication and repair protein RecF (Shewanella woodyi (strain ATCC 51908 / MS32)).